The sequence spans 176 residues: Large ribosomal subunit protein eL6 (176 aa).

A disordered region spans residues 1–27 (MSQVAPKWYQSEDVPAPKQTRKTARPQ).

This sequence belongs to the eukaryotic ribosomal protein eL6 family. As to quaternary structure, component of the large ribosomal subunit. Mature ribosomes consist of a small (40S) and a large (60S) subunit. The 40S subunit contains about 32 different proteins and 1 molecule of RNA (18S). The 60S subunit contains 45 different proteins and 3 molecules of RNA (25S, 5.8S and 5S).

Its subcellular location is the cytoplasm. Component of the ribosome, a large ribonucleoprotein complex responsible for the synthesis of proteins in the cell. The small ribosomal subunit (SSU) binds messenger RNAs (mRNAs) and translates the encoded message by selecting cognate aminoacyl-transfer RNA (tRNA) molecules. The large subunit (LSU) contains the ribosomal catalytic site termed the peptidyl transferase center (PTC), which catalyzes the formation of peptide bonds, thereby polymerizing the amino acids delivered by tRNAs into a polypeptide chain. The nascent polypeptides leave the ribosome through a tunnel in the LSU and interact with protein factors that function in enzymatic processing, targeting, and the membrane insertion of nascent chains at the exit of the ribosomal tunnel. The chain is Large ribosomal subunit protein eL6 from Candida albicans (strain SC5314 / ATCC MYA-2876) (Yeast).